The primary structure comprises 147 residues: Arginine repressor (147 aa).

The protein belongs to the ArgR family.

The protein resides in the cytoplasm. It participates in amino-acid biosynthesis; L-arginine biosynthesis [regulation]. Regulates arginine biosynthesis genes. This chain is Arginine repressor, found in Chlamydia felis (strain Fe/C-56) (Chlamydophila felis).